A 167-amino-acid polypeptide reads, in one-letter code: uncharacterized protein (167 aa).

The tract at residues Met-1–Cys-21 is disordered.

This is an uncharacterized protein from Homo sapiens (Human).